The primary structure comprises 468 residues: ATP synthase subunit beta 1 (468 aa).

Residue 151–158 (GGAGVGKT) participates in ATP binding.

It belongs to the ATPase alpha/beta chains family. F-type ATPases have 2 components, CF(1) - the catalytic core - and CF(0) - the membrane proton channel. CF(1) has five subunits: alpha(3), beta(3), gamma(1), delta(1), epsilon(1). CF(0) has three main subunits: a(1), b(2) and c(9-12). The alpha and beta chains form an alternating ring which encloses part of the gamma chain. CF(1) is attached to CF(0) by a central stalk formed by the gamma and epsilon chains, while a peripheral stalk is formed by the delta and b chains.

The protein localises to the cell inner membrane. The enzyme catalyses ATP + H2O + 4 H(+)(in) = ADP + phosphate + 5 H(+)(out). Produces ATP from ADP in the presence of a proton gradient across the membrane. The catalytic sites are hosted primarily by the beta subunits. The sequence is that of ATP synthase subunit beta 1 from Photobacterium profundum (strain SS9).